A 216-amino-acid polypeptide reads, in one-letter code: MVGRLSLQDVPELVDTKKKGDGVLDSPDSGLPPSPSPSHWGLAAATGGGGERAPVAGTLEPDATVTSVVPNPASLSHSLAGICSPRLCPLSFGEGVEFDPLPPKEIKYTSSVKYDSERHFIDDVQMPLGLVVASCSQTVTCIPNCTWRNYKAEVRFEPRHKPARFLSTTIIYPKYPKTVYTTTLDYNCHKKLRRFLSSVELEATEFLGSDGLLDEC.

The segment at 1–52 is disordered; sequence MVGRLSLQDVPELVDTKKKGDGVLDSPDSGLPPSPSPSHWGLAAATGGGGER. Residues Ser-6 and Ser-26 each carry the phosphoserine modification.

The protein belongs to the Refilin family. As to quaternary structure, interacts with FLNA and FLNB.

It is found in the cytoplasm. The protein localises to the cytoskeleton. Functionally, involved in the regulation of the perinuclear actin network and nuclear shape through interaction with filamins. Plays an essential role in the formation of cartilaginous skeletal elements. The protein is Refilin-B of Rattus norvegicus (Rat).